We begin with the raw amino-acid sequence, 249 residues long: 5'-nucleotidase SurE (249 aa).

4 residues coordinate a divalent metal cation: aspartate 8, aspartate 9, serine 39, and asparagine 91.

It belongs to the SurE nucleotidase family. A divalent metal cation is required as a cofactor.

Its subcellular location is the cytoplasm. The catalysed reaction is a ribonucleoside 5'-phosphate + H2O = a ribonucleoside + phosphate. Functionally, nucleotidase that shows phosphatase activity on nucleoside 5'-monophosphates. This is 5'-nucleotidase SurE from Pseudomonas aeruginosa (strain UCBPP-PA14).